Here is a 491-residue protein sequence, read N- to C-terminus: Ketol-acid reductoisomerase (NADP(+)) (491 aa).

In terms of domain architecture, KARI N-terminal Rossmann spans 15–208 (AQLGKCRFMG…GGHRAGVLES (194 aa)). NADP(+) contacts are provided by residues 45–48 (CGAQ), Arg68, Arg76, Ser78, and 108–110 (DKQ). The active site involves His132. Gly158 contributes to the NADP(+) binding site. KARI C-terminal knotted domains lie at 209–344 (SFVA…TAPQ) and 345–484 (YEGK…MTDM). Residues Asp217, Glu221, Glu389, and Glu393 each contribute to the Mg(2+) site. Ser414 contributes to the substrate binding site.

It belongs to the ketol-acid reductoisomerase family. The cofactor is Mg(2+).

The enzyme catalyses (2R)-2,3-dihydroxy-3-methylbutanoate + NADP(+) = (2S)-2-acetolactate + NADPH + H(+). It catalyses the reaction (2R,3R)-2,3-dihydroxy-3-methylpentanoate + NADP(+) = (S)-2-ethyl-2-hydroxy-3-oxobutanoate + NADPH + H(+). Its pathway is amino-acid biosynthesis; L-isoleucine biosynthesis; L-isoleucine from 2-oxobutanoate: step 2/4. It functions in the pathway amino-acid biosynthesis; L-valine biosynthesis; L-valine from pyruvate: step 2/4. Its function is as follows. Involved in the biosynthesis of branched-chain amino acids (BCAA). Catalyzes an alkyl-migration followed by a ketol-acid reduction of (S)-2-acetolactate (S2AL) to yield (R)-2,3-dihydroxy-isovalerate. In the isomerase reaction, S2AL is rearranged via a Mg-dependent methyl migration to produce 3-hydroxy-3-methyl-2-ketobutyrate (HMKB). In the reductase reaction, this 2-ketoacid undergoes a metal-dependent reduction by NADPH to yield (R)-2,3-dihydroxy-isovalerate. This chain is Ketol-acid reductoisomerase (NADP(+)), found in Shigella flexneri.